Consider the following 324-residue polypeptide: Ferrochelatase (324 aa).

Residues histidine 197 and glutamate 278 each contribute to the Fe cation site.

Belongs to the ferrochelatase family.

It is found in the cytoplasm. It catalyses the reaction heme b + 2 H(+) = protoporphyrin IX + Fe(2+). The protein operates within porphyrin-containing compound metabolism; protoheme biosynthesis; protoheme from protoporphyrin-IX: step 1/1. Its function is as follows. Catalyzes the ferrous insertion into protoporphyrin IX. The sequence is that of Ferrochelatase from Aeromonas hydrophila subsp. hydrophila (strain ATCC 7966 / DSM 30187 / BCRC 13018 / CCUG 14551 / JCM 1027 / KCTC 2358 / NCIMB 9240 / NCTC 8049).